Here is a 740-residue protein sequence, read N- to C-terminus: Arf-GAP with coiled-coil, ANK repeat and PH domain-containing protein 1 (740 aa).

Residues 1–226 (MTVKLDFEEC…RKELGTQLHN (226 aa)) enclose the BAR domain. The interval 1–382 (MTVKLDFEEC…RGPGQVSGYH (382 aa)) is required for formation of endosomal tubules when overexpressed with PIP5K1C. Residues 265–360 (GLVMEGHLFK…WVSAVQSSIA (96 aa)) enclose the PH domain. Residues 405–527 (GQVAAQVQSV…KFLTKLPEIR (123 aa)) form the Arf-GAP domain. The tract at residues 405 to 740 (GQVAAQVQSV…SRRSHDLHTL (336 aa)) is required for interaction with GULP1. The C4-type zinc-finger motif lies at 420-443 (CCDCREPAPEWASINLGVTLCIQC). Tyr485 is subject to 3'-nitrotyrosine. The segment at 525–562 (EIRGRRGGRGPPRGHPPVPPKPPIRPHSGIVRSKSECP) is disordered. The interval 525-566 (EIRGRRGGRGPPRGHPPVPPKPPIRPHSGIVRSKSECPSDDM) is prevents interaction with ITGB1 when S-554 is not phosphorylated. The segment covering 537-549 (RGHPPVPPKPPIR) has biased composition (pro residues). ANK repeat units follow at residues 606–635 (GNAT…NVNQ), 639–668 (AGRG…DLGA), and 672–702 (EGRD…EAEA).

Banana-shaped homodimer laterally assembling into tetramers, the tetramers further pack helically onto the membrane. Interacts with GTP-bound ARF6. Interacts with third cytoplasmic loop of SLC2A4/GLUT4. Interacts with CLTC. Interacts with GULP1. Forms a complex with GDP-bound ARF6 and GULP1. Interacts with ITGB1; required for ITGB1 recycling.

It localises to the recycling endosome membrane. Its activity is regulated as follows. GAP activity stimulated by phosphatidylinositol 4,5-bisphosphate (PIP2) and phosphatidic acid. Functionally, GTPase-activating protein (GAP) for ADP ribosylation factor 6 (ARF6) required for clathrin-dependent export of proteins from recycling endosomes to trans-Golgi network and cell surface. Required for regulated export of ITGB1 from recycling endosomes to the cell surface and ITGB1-dependent cell migration. This chain is Arf-GAP with coiled-coil, ANK repeat and PH domain-containing protein 1 (Acap1), found in Mus musculus (Mouse).